The following is a 253-amino-acid chain: Prolactin-7A2 (253 aa).

The first 30 residues, 1 to 30 (MSFSFSQPCPSGALLLVVVSSLLLWENVAS), serve as a signal peptide directing secretion. N-linked (GlcNAc...) asparagine glycosylation is found at Asn36, Asn103, and Asn135. Cystine bridges form between Cys101/Cys218 and Cys235/Cys244.

This sequence belongs to the somatotropin/prolactin family. As to expression, expression restricted to the placental tissue. Expressed only in the spongiotrophoblasts.

It is found in the secreted. The polypeptide is Prolactin-7A2 (Prl7a2) (Mus musculus (Mouse)).